The chain runs to 448 residues: Adenylosuccinate synthetase (448 aa).

GTP is bound by residues 36–42 and 64–66; these read GDEGKGK and GHT. Residue Asp-37 is the Proton acceptor of the active site. Mg(2+) is bound by residues Asp-37 and Gly-64. Residues 37-40, 62-65, Thr-154, Arg-168, Asn-246, Thr-261, and Arg-325 contribute to the IMP site; these read DEGK and NAGH. His-65 (proton donor) is an active-site residue. 321-327 serves as a coordination point for substrate; it reads VTTKRKR. Residues Arg-327, 353–355, and 436–438 each bind GTP; these read KLD and GVG.

It belongs to the adenylosuccinate synthetase family. Homodimer. The cofactor is Mg(2+).

The protein localises to the cytoplasm. The enzyme catalyses IMP + L-aspartate + GTP = N(6)-(1,2-dicarboxyethyl)-AMP + GDP + phosphate + 2 H(+). Its pathway is purine metabolism; AMP biosynthesis via de novo pathway; AMP from IMP: step 1/2. In terms of biological role, plays an important role in the de novo pathway and in the salvage pathway of purine nucleotide biosynthesis. Catalyzes the first committed step in the biosynthesis of AMP from IMP. This is Adenylosuccinate synthetase from Drosophila virilis (Fruit fly).